Reading from the N-terminus, the 433-residue chain is uncharacterized protein (433 aa).

Transmembrane regions (helical) follow at residues 28-48 (FAALGPGILMASAAVGGSHII), 56-76 (IYGWQLAIIIILANLFKYPFF), 102-122 (IWIFFLLNVFATVINTAAVGL), 126-146 (AILTFVLPVQVPVPTLSFIVI), 164-184 (LSKLIMIALTITTVSAVIIAL), 207-227 (ALGFIVALMGWMPAPIEISAI), 250-270 (FNVGYIGTAILALVFLALGAL), 304-324 (GLIAFIAFMCMFGTTITVIDG), 345-365 (SYLNVAITFAALAGLAIIFYF), 375-395 (FAMIASFVSTPVFAYLNLSLV), and 406-426 (LLWLSLIGLMYLTSFTLLFIA).

It localises to the cell membrane. This is an uncharacterized protein from Pasteurella multocida (strain Pm70).